Here is a 174-residue protein sequence, read N- to C-terminus: Protein C (174 aa).

It belongs to the morbillivirus protein C family.

The chain is Protein C (P/V/C) from Phocine distemper virus (PDV).